Here is a 390-residue protein sequence, read N- to C-terminus: Acetate kinase (390 aa).

Asn10 serves as a coordination point for Mg(2+). Lys17 provides a ligand contact to ATP. Arg89 lines the substrate pocket. Asp146 functions as the Proton donor/acceptor in the catalytic mechanism. Residues 204 to 208 (HLGNG), 278 to 280 (DMR), and 323 to 327 (GIGEN) contribute to the ATP site. Position 376 (Glu376) interacts with Mg(2+).

The protein belongs to the acetokinase family. As to quaternary structure, homodimer. The cofactor is Mg(2+). It depends on Mn(2+) as a cofactor.

Its subcellular location is the cytoplasm. The catalysed reaction is acetate + ATP = acetyl phosphate + ADP. It participates in metabolic intermediate biosynthesis; acetyl-CoA biosynthesis; acetyl-CoA from acetate: step 1/2. In terms of biological role, catalyzes the formation of acetyl phosphate from acetate and ATP. Can also catalyze the reverse reaction. This chain is Acetate kinase, found in Mycoplasma pneumoniae (strain ATCC 29342 / M129 / Subtype 1) (Mycoplasmoides pneumoniae).